The sequence spans 1337 residues: C-Jun-amino-terminal kinase-interacting protein 3 (1337 aa).

The RH1 domain maps to 12 to 100; it reads VVVYQDDYCS…LTQYEREKAL (89 aa). Positions 50–80 are kinesin-binding domain (KBD); essential for its function in axon elongation; sequence EVVKELMPLVVNVLENLDSVLSENQEHEVEL. Residues 58–177 adopt a coiled-coil conformation; that stretch reads LVVNVLENLD…HTEMIQTYVE (120 aa). 2 disordered regions span residues 183 to 211 and 245 to 285; these read KMQQ…SLNV and SSSY…PSAA. A compositionally biased stretch (polar residues) spans 184-198; sequence MQQVGGSGQTESSLP. The interval 210 to 226 is JNK-binding domain (JBD); essential for its function in axon elongation; sequence NVFPLADGMVRAQMGGK. Positions 261–270 are enriched in low complexity; that stretch reads SSAAATPSTT. Phosphothreonine; by MAPK is present on residues Thr-266, Thr-276, and Thr-287. Polar residues predominate over residues 271–282; sequence GTKSNTPTSSVP. Phosphoserine; by ROCK1 is present on residues Ser-315 and Ser-365. At Ser-366 the chain carries Phosphoserine. The tract at residues 424–459 is leucine zipper-like domain (LZ); essential for its function in axon elongation; sequence LLLENSQLLETKNALNVVKNDLIAKVDQLSGEQEVL. Residues 437–555 are a coiled coil; the sequence is ALNVVKNDLI…LQEAVRWTEM (119 aa). Positions 459–515 are interaction with NTRK2; it reads LKGELEAAKQAKVKLENRIKELEEELKRVKSEAVTARREPREEVEDVSSYLCTELDK. One can recognise an RH2 domain in the interval 521–595; sequence RRRFTRVEMA…SPPPAKRSYP (75 aa). Ser-603 carries the post-translational modification Phosphoserine. The disordered stretch occupies residues 633–655; the sequence is DDCTSSARREQKREQYRQVREHV. Basic and acidic residues predominate over residues 639–655; that stretch reads ARREQKREQYRQVREHV. Ser-677 is subject to Phosphoserine. 2 disordered regions span residues 719 to 772 and 859 to 966; these read WKPH…ATSS and PRSN…TTTS. The span at 739–765 shows a compositional bias: basic and acidic residues; that stretch reads LTCDREGEGEPKSTHPSPEKKKAKETP. Composition is skewed to polar residues over residues 879 to 892 and 941 to 952; these read VATT…PSQS and ENGSESNGTIVQ.

Belongs to the JIP scaffold family. Forms homo- or heterooligomeric complexes. The central region of MAPK8IP3 interacts with the C-terminal of MAPK8IP2 but not MAPK8IP1. Binds specific components of the JNK signaling pathway namely MAPK8/JNK1, MAPK9/JNK2 and MAPK10/JNK3 to the N-terminal region, MAP2K4/MKK4 and MAP2K7/MKK7 to the central region and MAP3K11 to the C-terminal region. Binds the TPR motif-containing C-terminal of kinesin light chain, KLC1. Pre-assembled MAPK8IP1 scaffolding complexes are then transported as a cargo of kinesin, to the required subcellular location. Interacts with ROCK1 and this interaction is enhanced by ultraviolet-B (UVB) radiation. Interacts with SH3RF2. Interacts with NTRK2/TRKB and NTRK3/TRKC. Post-translationally, phosphorylation by ROCK1 is crucial for the recruitment of JNK. Highly expressed throughout many regions of the brain and at lower levels in the heart, liver, lung, testes and kidney. All isoforms have been identified in the brain, isoform 1a is also expressed in the spleen and lung.

The protein resides in the cytoplasm. It localises to the golgi apparatus. The protein localises to the cytoplasmic vesicle. It is found in the cell projection. Its subcellular location is the growth cone. The protein resides in the axon. It localises to the dendrite. The protein localises to the perinuclear region. Its function is as follows. The JNK-interacting protein (JIP) group of scaffold proteins selectively mediates JNK signaling by aggregating specific components of the MAPK cascade to form a functional JNK signaling module. May function as a regulator of vesicle transport, through interactions with the JNK-signaling components and motor proteins. Promotes neuronal axon elongation in a kinesin- and JNK-dependent manner. Activates cofilin at axon tips via local activation of JNK, thereby regulating filopodial dynamics and enhancing axon elongation. Its binding to kinesin heavy chains (KHC), promotes kinesin-1 motility along microtubules and is essential for axon elongation and regeneration. Regulates cortical neuronal migration by mediating NTRK2/TRKB anterograde axonal transport during brain development. Acts as an adapter that bridges the interaction between NTRK2/TRKB and KLC1 and drives NTRK2/TRKB axonal but not dendritic anterograde transport, which is essential for subsequent BDNF-triggered signaling and filopodia formation. In Mus musculus (Mouse), this protein is C-Jun-amino-terminal kinase-interacting protein 3 (Mapk8ip3).